A 441-amino-acid chain; its full sequence is MTTTRFAPSPTGYIHIGNLRTALMNYLIARKAGGTFILRIDDTDPERSKEEYVDGIKQDLEWLGLHWDRIERQSLRLDRYAQAADKLRDMGRFYEAFETPTELDLKRKKQLNMGKPPVYDRAALELSDAEKDALRAERGAGVWRFKLERERIEWADGILGDISIDAASVSDPVLIRGDGQILYTLASVVDDTEMGVTNVVRGSDHVTNTATQIQIINALGGTVPDFAHHSLLTGPQGEALSKRLGTLALRDLRENGVQPAALLSLMARLGSSDPVELQTDMADLIEGFDISRFGSAPTKFDADDLYPLTARYLAGLPLADVAGDLSAAGVPDDMAAQFWDVTRENITTLKDIGPWWTLMRDGAEPQIDDEDREFVAEALALLPDGPFDATTWGTWTAAVKEKTGRKGRALFMPLRKALTGQSHGPDMSGLMPLLQVVKARR.

The 'HIGH' region motif lies at Pro-8 to Asn-18. Residues Ala-239–Arg-243 carry the 'KMSKS' region motif. Lys-242 is an ATP binding site.

The protein belongs to the class-I aminoacyl-tRNA synthetase family. Glutamate--tRNA ligase type 1 subfamily. In terms of assembly, monomer.

Its subcellular location is the cytoplasm. It catalyses the reaction tRNA(Glu) + L-glutamate + ATP = L-glutamyl-tRNA(Glu) + AMP + diphosphate. Its function is as follows. Catalyzes the attachment of glutamate to tRNA(Glu) in a two-step reaction: glutamate is first activated by ATP to form Glu-AMP and then transferred to the acceptor end of tRNA(Glu). This Roseobacter denitrificans (strain ATCC 33942 / OCh 114) (Erythrobacter sp. (strain OCh 114)) protein is Glutamate--tRNA ligase 1.